Reading from the N-terminus, the 475-residue chain is Ribulose bisphosphate carboxylase large chain (475 aa).

Residues 1 to 2 (MS) constitute a propeptide that is removed on maturation. Residue P3 is modified to N-acetylproline. Position 14 is an N6,N6,N6-trimethyllysine (K14). Residues N123 and T173 each coordinate substrate. K175 (proton acceptor) is an active-site residue. A substrate-binding site is contributed by K177. Residues K201, D203, and E204 each contribute to the Mg(2+) site. Position 201 is an N6-carboxylysine (K201). The Proton acceptor role is filled by H294. Substrate-binding residues include R295, H327, and S379.

Belongs to the RuBisCO large chain family. Type I subfamily. Heterohexadecamer of 8 large chains and 8 small chains; disulfide-linked. The disulfide link is formed within the large subunit homodimers. It depends on Mg(2+) as a cofactor. The disulfide bond which can form in the large chain dimeric partners within the hexadecamer appears to be associated with oxidative stress and protein turnover.

It is found in the plastid. The protein resides in the chloroplast. The catalysed reaction is 2 (2R)-3-phosphoglycerate + 2 H(+) = D-ribulose 1,5-bisphosphate + CO2 + H2O. It catalyses the reaction D-ribulose 1,5-bisphosphate + O2 = 2-phosphoglycolate + (2R)-3-phosphoglycerate + 2 H(+). Functionally, ruBisCO catalyzes two reactions: the carboxylation of D-ribulose 1,5-bisphosphate, the primary event in carbon dioxide fixation, as well as the oxidative fragmentation of the pentose substrate in the photorespiration process. Both reactions occur simultaneously and in competition at the same active site. This is Ribulose bisphosphate carboxylase large chain from Keteleeria davidiana (David's keteleeria).